Here is a 206-residue protein sequence, read N- to C-terminus: MGKYKKFFAIAVCSLLLFTVYFYRDPDRVITKGNNIILSPADGTVEYIKFYENGNPEVFKDGNCYVLNVSRYFPNGCYVVGIFMSPLDVHVNRAPIGGRIVYIKHIDGSFYPAFLEGVEKINERNIVIIKNGSEYVGVVQIAGFVARRCWLSIKEGECINMGQKIGMIKLGSQTAVIIPANYNITVKVGERVYAGQTIIAVKRTDN.

Serine 172 (schiff-base intermediate with substrate; via pyruvic acid) is an active-site residue. Serine 172 is subject to Pyruvic acid (Ser); by autocatalysis.

This sequence belongs to the phosphatidylserine decarboxylase family. PSD-A subfamily. In terms of assembly, heterodimer of a large membrane-associated beta subunit and a small pyruvoyl-containing alpha subunit. The cofactor is pyruvate. Post-translationally, is synthesized initially as an inactive proenzyme. Formation of the active enzyme involves a self-maturation process in which the active site pyruvoyl group is generated from an internal serine residue via an autocatalytic post-translational modification. Two non-identical subunits are generated from the proenzyme in this reaction, and the pyruvate is formed at the N-terminus of the alpha chain, which is derived from the carboxyl end of the proenzyme. The post-translation cleavage follows an unusual pathway, termed non-hydrolytic serinolysis, in which the side chain hydroxyl group of the serine supplies its oxygen atom to form the C-terminus of the beta chain, while the remainder of the serine residue undergoes an oxidative deamination to produce ammonia and the pyruvoyl prosthetic group on the alpha chain.

It localises to the cell membrane. It catalyses the reaction archaetidylserine + H(+) = archaetidylethanolamine + CO2. Its function is as follows. Catalyzes the formation of archaetidylethanolamine (PtdEtn) from archaetidylserine (PtdSer). In Methanocaldococcus jannaschii (strain ATCC 43067 / DSM 2661 / JAL-1 / JCM 10045 / NBRC 100440) (Methanococcus jannaschii), this protein is Putative archaetidylserine decarboxylase proenzyme.